The sequence spans 188 residues: Inosine triphosphate pyrophosphatase (188 aa).

11–16 (TGNKHK) is a binding site for ITP. A Mg(2+)-binding site is contributed by E39. ITP is bound by residues K51, 67-68 (DT), K84, 143-146 (FGWN), and 171-172 (HR).

This sequence belongs to the HAM1 NTPase family. Homodimer. It depends on Mg(2+) as a cofactor. The cofactor is Mn(2+).

Its subcellular location is the cytoplasm. The protein localises to the nucleus. The enzyme catalyses ITP + H2O = IMP + diphosphate + H(+). It catalyses the reaction dITP + H2O = dIMP + diphosphate + H(+). The catalysed reaction is XTP + H2O = XMP + diphosphate + H(+). Its function is as follows. Pyrophosphatase that hydrolyzes non-canonical purine nucleotides such as inosine triphosphate (ITP), deoxyinosine triphosphate (dITP) or xanthosine 5'-triphosphate (XTP) to their respective monophosphate derivatives. The enzyme does not distinguish between the deoxy- and ribose forms. Probably excludes non-canonical purines from RNA and DNA precursor pools, thus preventing their incorporation into RNA and DNA and avoiding chromosomal lesions. The sequence is that of Inosine triphosphate pyrophosphatase from Schizosaccharomyces pombe (strain 972 / ATCC 24843) (Fission yeast).